We begin with the raw amino-acid sequence, 634 residues long: Probable potassium transport system protein Kup (634 aa).

12 consecutive transmembrane segments (helical) span residues isoleucine 21–leucine 41, valine 58–valine 78, isoleucine 110–isoleucine 130, proline 148–cysteine 168, phenylalanine 180–isoleucine 200, phenylalanine 217–threonine 237, tryptophan 258–leucine 278, glycine 296–isoleucine 316, isoleucine 348–phenylalanine 368, alanine 377–alanine 397, leucine 408–isoleucine 428, and aspartate 432–leucine 452.

It belongs to the HAK/KUP transporter (TC 2.A.72) family.

It localises to the cell inner membrane. It catalyses the reaction K(+)(in) + H(+)(in) = K(+)(out) + H(+)(out). Functionally, transport of potassium into the cell. Likely operates as a K(+):H(+) symporter. This chain is Probable potassium transport system protein Kup, found in Xylella fastidiosa (strain Temecula1 / ATCC 700964).